Consider the following 293-residue polypeptide: uncharacterized protein (293 aa).

The tract at residues 1-22 (MTFNEGVQIDTSTTSTSGSGGG) is disordered. The helical transmembrane segment at 25 to 45 (LAIGGGLGGLLVVVVAMLLGV) threads the bilayer. The disordered stretch occupies residues 243–265 (GDDRIQQQTTGRTNPETWTHGSA). Residues 248–265 (QQQTTGRTNPETWTHGSA) are compositionally biased toward polar residues.

It is found in the membrane. This is an uncharacterized protein from Mycobacterium tuberculosis (strain CDC 1551 / Oshkosh).